The sequence spans 908 residues: Low affinity vacuolar monovalent cation/H(+) antiporter (908 aa).

Positions 1–15 are enriched in polar residues; it reads MAKNNHISASGNSTS. Residues 1 to 20 form a disordered region; sequence MAKNNHISASGNSTSGDHRL. Topologically, residues 1-244 are cytoplasmic; the sequence is MAKNNHISAS…WEVTCSNVLW (244 aa). Threonine 26 bears the Phosphothreonine mark. A Phosphoserine modification is found at serine 32. A Phosphothreonine modification is found at threonine 33. Residues 68-147 are disordered; the sequence is NKSKRSVSSQ…DDEDANDDSR (80 aa). Positions 73-87 are enriched in low complexity; the sequence is SVSSQSPIVHSSNNT. Over residues 102 to 121 the composition is skewed to polar residues; that stretch reads ESLSSKSHSVPDLNTATPSS. Serine 110 bears the Phosphoserine mark. Threonine 118 carries the post-translational modification Phosphothreonine. Serine 121 carries the post-translational modification Phosphoserine. A helical membrane pass occupies residues 245-265; sequence FILFGFPIAILFYSAAIVVFL. The Vacuolar segment spans residues 266–408; the sequence is LGGGGLVTNS…GRVLFYTIFH (143 aa). A glycan (N-linked (GlcNAc...) asparagine) is linked at asparagine 361. The chain crosses the membrane as a helical span at residues 409 to 429; it reads LVLQPILAVLSLCLWLLVFTI. Topologically, residues 430–494 are cytoplasmic; that stretch reads PMSNVLWQIM…HYYKYTVDGT (65 aa). A helical membrane pass occupies residues 495–515; that stretch reads NVIVVNLISIVFFTIFDFYVL. The Vacuolar portion of the chain corresponds to 516–530; it reads KNFLHWKTWFTYESS. The helical transmembrane segment at 531–551 threads the bilayer; it reads IFILCLTSTIPLAFYIGQAVA. The Cytoplasmic portion of the chain corresponds to 552–560; sequence SISAQTSMG. The helical transmembrane segment at 561-581 threads the bilayer; sequence VGAVINAFFSTIVEIFLYCVA. Over 582–587 the chain is Vacuolar; it reads LQQKKG. A helical membrane pass occupies residues 588 to 608; that stretch reads LLVEGSMIGSILGAVLLLPGL. Topologically, residues 609-626 are cytoplasmic; the sequence is SMCGGALNRKTQRYNPAS. Residues 627 to 647 traverse the membrane as a helical segment; sequence AGVSSALLIFSMIVMFVPTVL. Topologically, residues 648-686 are vacuolar; it reads YEIYGGYSVNCADGANDRDCTFSHPPLKFNRLFTHVIQP. Residues 687 to 707 traverse the membrane as a helical segment; that stretch reads MSISCAIVLFCAYIIGLWFTL. Over 708 to 746 the chain is Cytoplasmic; sequence RTHAKMIWQLPIADPTSTAPEQQEQNSHDAPNWSRSKST. A helical membrane pass occupies residues 747–767; the sequence is CILLMSTLLYAIIAEILVSCV. At 768 to 783 the chain is on the vacuolar side; that stretch reads DAVLEDIPSLNPKFLG. A helical transmembrane segment spans residues 784-804; sequence LTIFALIPNTTEFLNAISFAI. The Cytoplasmic segment spans residues 805-816; the sequence is HGNVALSMEIGS. Residues 817-837 traverse the membrane as a helical segment; that stretch reads AYALQVCLLQIPSLVIYSIFY. Topologically, residues 838–851 are vacuolar; that stretch reads TWNVKKSMINIRTQ. A helical membrane pass occupies residues 852–872; it reads MFPLVFPRWDIFGAMTSVFMF. Residues 873–885 are Cytoplasmic-facing; it reads TYLYAEGKSNYFK. A helical membrane pass occupies residues 886-906; that stretch reads GSMLILLYIIIVVGFYFQGAL. The Vacuolar segment spans residues 907–908; it reads SE.

Belongs to the Ca(2+):cation antiporter (CaCA) (TC 2.A.19) family.

The protein localises to the vacuole membrane. Functionally, has a role in promoting intracellular monovalent cation sequestration via the exchange of monovalent cations and especially Na(+) for hydrogen ions across the vacuolar membrane. This is Low affinity vacuolar monovalent cation/H(+) antiporter (VNX1) from Saccharomyces cerevisiae (strain ATCC 204508 / S288c) (Baker's yeast).